A 115-amino-acid polypeptide reads, in one-letter code: NADH-ubiquinone oxidoreductase chain 3 (115 aa).

The next 3 membrane-spanning stretches (helical) occupy residues 5 to 25, 55 to 75, and 86 to 106; these read TALL…FWFF, FFLV…LLPL, and IMML…AYEW.

This sequence belongs to the complex I subunit 3 family. Core subunit of respiratory chain NADH dehydrogenase (Complex I) which is composed of 45 different subunits. Interacts with TMEM186. Interacts with TMEM242.

The protein resides in the mitochondrion inner membrane. The catalysed reaction is a ubiquinone + NADH + 5 H(+)(in) = a ubiquinol + NAD(+) + 4 H(+)(out). Core subunit of the mitochondrial membrane respiratory chain NADH dehydrogenase (Complex I) which catalyzes electron transfer from NADH through the respiratory chain, using ubiquinone as an electron acceptor. Essential for the catalytic activity of complex I. The sequence is that of NADH-ubiquinone oxidoreductase chain 3 from Peromyscus sejugis (Santa Cruz mouse).